A 735-amino-acid polypeptide reads, in one-letter code: MRVKSVYKKLSVSFILVMLSASQEVNSQAKVSVNLNVKHVVGGISEFDRTKYITIHANQIENEWDGDNFTSDLRDHFLNGFDVYLGRDTGGITWNLNNMQEDASRPGFANPSNIISKGINTRNNYASKTHLHVYENRKSNHVVAAQLHPFWTGESQIATKGTGWELASPTATGEYMGRYFNEFYGGNGEPVPSWIEVINEPAYEALGGKKNFTNSLQEIADFHVEVADAIRVQNPNLKIGGYTAAFPDFETGDFQRWINRDKLFIDVAGEKMDFWSWHLYDFPVIGGKEDIRSGSNVEATFDMHDHYSMLKLGHKKPYVISEYGAQTHDFRNEGWSSYRDWLFVRAQNSLMMSFMERPEDIAMAIPFTIVKAEWGFNTDKNLPYPARLMRKANEPESYTGEWVYTDRVKFYDLWKNVKGTRIDTKSTDLDIQVDAYVDGNKGYLILNNLESEETEITLDVFEKYDSSITNILKRHLTLSSNNVVIEEETFSSSISTVQLGAGSTMILEYTFANSLTIDETSTEEKYYADSYLQPIVASQPILFAVNNVVKSATYGEAVLRLGLGRDHGKSLKPIVKVNNTEVVVPDDWRGYDQADKGRFFGTIEIPVSYDLLTTNNTVSVEFPDSSGHVSSVIMQVFNFSSDIRTLSVNDVTASDTKTLLISPNPVKDGMLNMTIPAKLKNPIASIYNVSGSLLIKQSMKHSQTSIPVNLFDKGVYLLVLQDGSKKIGESKFVIQ.

The first 27 residues, 1–27 (MRVKSVYKKLSVSFILVMLSASQEVNS), serve as a signal peptide directing secretion. Catalysis depends on Glu-200, which acts as the Proton donor. Catalysis depends on Glu-322, which acts as the Nucleophile.

Belongs to the glycosyl hydrolase 86 family.

The enzyme catalyses Endohydrolysis of beta-(1-&gt;4)-linkages between beta-D-galactopyranose-6-sulfate and 3,6-anhydro-alpha-L-galactopyranose units in funoran.. It carries out the reaction Hydrolysis of (1-&gt;4)-beta-D-galactosidic linkages in agarose, giving the tetramer as the predominant product.. Its activity is regulated as follows. Agarase activity is enhanced in the presence of NaCl. Agarase activity is significantly inhibited by Zn(2+) and slightly activated by several divalent ions including Mg(2+), Cd(2+) and Ca(2+). Functionally, endohydrolase that cleaves the beta-1,4 glycosidic bond between beta-D-galactopyranose-6-sulfate (G6S) and 3,6-anhydro-alpha-L-galactopyranose (LA) unit of funoran, a polysaccharide produced by red algae of the genus Gloiopeltis. It releases the disaccharide LA-G6S as the predominant end product. Also acts as a random endo-acting beta-agarase, which can hydrolyze agarose tetrasaccharides and hexasaccharides, and produces disaccharides as smallest products. Besides typical agarose oligosaccharides, it can use methylated galactoses. The enzyme exhibits higher catalytic efficiency towards agarose, but binds funoran preferentially. Has no activity on porphyran. This is Funoran endo-beta-hydrolase from Wenyingzhuangia aestuarii.